A 291-amino-acid polypeptide reads, in one-letter code: Elongation factor Ts (291 aa).

Residues 80–83 (TDFV) form an involved in Mg(2+) ion dislocation from EF-Tu region.

Belongs to the EF-Ts family.

The protein localises to the cytoplasm. Associates with the EF-Tu.GDP complex and induces the exchange of GDP to GTP. It remains bound to the aminoacyl-tRNA.EF-Tu.GTP complex up to the GTP hydrolysis stage on the ribosome. In Limosilactobacillus reuteri (strain DSM 20016) (Lactobacillus reuteri), this protein is Elongation factor Ts.